Reading from the N-terminus, the 212-residue chain is Ribonuclease HII (212 aa).

The 206-residue stretch at 7–212 folds into the RNase H type-2 domain; that stretch reads SQILGIDEAG…TIENITKSTE (206 aa). Residues aspartate 13, glutamate 14, and aspartate 111 each coordinate a divalent metal cation.

This sequence belongs to the RNase HII family. Mn(2+) serves as cofactor. Requires Mg(2+) as cofactor.

The protein localises to the cytoplasm. The enzyme catalyses Endonucleolytic cleavage to 5'-phosphomonoester.. Endonuclease that specifically degrades the RNA of RNA-DNA hybrids. In Methanosphaera stadtmanae (strain ATCC 43021 / DSM 3091 / JCM 11832 / MCB-3), this protein is Ribonuclease HII.